Reading from the N-terminus, the 244-residue chain is Probable transcriptional regulatory protein CHY_1525 (244 aa).

The protein belongs to the TACO1 family.

The protein localises to the cytoplasm. This is Probable transcriptional regulatory protein CHY_1525 from Carboxydothermus hydrogenoformans (strain ATCC BAA-161 / DSM 6008 / Z-2901).